The following is a 505-amino-acid chain: Glycerol kinase (505 aa).

Threonine 13 lines the ADP pocket. Positions 13, 14, and 15 each coordinate ATP. Threonine 13 contributes to the sn-glycerol 3-phosphate binding site. Arginine 17 is a binding site for ADP. Residues arginine 83, glutamate 84, tyrosine 135, and aspartate 247 each contribute to the sn-glycerol 3-phosphate site. Glycerol-binding residues include arginine 83, glutamate 84, tyrosine 135, aspartate 247, and glutamine 248. Threonine 269 and glycine 313 together coordinate ADP. Threonine 269, glycine 313, glutamine 317, and glycine 414 together coordinate ATP. ADP is bound by residues glycine 414 and asparagine 418.

The protein belongs to the FGGY kinase family.

The enzyme catalyses glycerol + ATP = sn-glycerol 3-phosphate + ADP + H(+). The protein operates within polyol metabolism; glycerol degradation via glycerol kinase pathway; sn-glycerol 3-phosphate from glycerol: step 1/1. With respect to regulation, inhibited by fructose 1,6-bisphosphate (FBP). In terms of biological role, key enzyme in the regulation of glycerol uptake and metabolism. Catalyzes the phosphorylation of glycerol to yield sn-glycerol 3-phosphate. In Clavibacter michiganensis subsp. michiganensis (strain NCPPB 382), this protein is Glycerol kinase.